A 669-amino-acid polypeptide reads, in one-letter code: UvrABC system protein B (669 aa).

A Helicase ATP-binding domain is found at 26-183; the sequence is TNFHAGIAKQ…RHLTELQYTR (158 aa). ATP is bound at residue 39–46; the sequence is GVTGSGKT. A Beta-hairpin motif is present at residues 92 to 115; it reads YYDYYQPEAYVPASDTFIEKDSSI. Residues 431-597 form the Helicase C-terminal domain; it reads QVDDLISQIN…SVVRPISDIL (167 aa). The UVR domain occupies 631–666; it reads AAQMKMLEQQMYQHARDLEFEDAARIRDQIQRLREA.

It belongs to the UvrB family. Forms a heterotetramer with UvrA during the search for lesions. Interacts with UvrC in an incision complex.

The protein localises to the cytoplasm. Functionally, the UvrABC repair system catalyzes the recognition and processing of DNA lesions. A damage recognition complex composed of 2 UvrA and 2 UvrB subunits scans DNA for abnormalities. Upon binding of the UvrA(2)B(2) complex to a putative damaged site, the DNA wraps around one UvrB monomer. DNA wrap is dependent on ATP binding by UvrB and probably causes local melting of the DNA helix, facilitating insertion of UvrB beta-hairpin between the DNA strands. Then UvrB probes one DNA strand for the presence of a lesion. If a lesion is found the UvrA subunits dissociate and the UvrB-DNA preincision complex is formed. This complex is subsequently bound by UvrC and the second UvrB is released. If no lesion is found, the DNA wraps around the other UvrB subunit that will check the other stand for damage. The sequence is that of UvrABC system protein B from Xylella fastidiosa (strain M12).